A 651-amino-acid polypeptide reads, in one-letter code: 120 kDa Glycoprotein O (651 aa).

Positions 1–56 are cleaved as a signal peptide; sequence MHLEVIVQSYKKSKYYFSHTFYLYKFIVVNSPDMLHISRLGLFLGLFAIVMHSVNL. N-linked (GlcNAc...) asparagine; by host glycans are attached at residues asparagine 74, asparagine 97, asparagine 147, asparagine 208, asparagine 223, asparagine 234, and asparagine 254. Low complexity predominate over residues 275–292; that stretch reads SSTSASLTSPHIPSTNIP. The disordered stretch occupies residues 275–303; that stretch reads SSTSASLTSPHIPSTNIPTPAPPPVTKNS. N-linked (GlcNAc...) asparagine; by host glycans are attached at residues asparagine 302, asparagine 355, asparagine 378, asparagine 395, asparagine 469, asparagine 502, asparagine 520, asparagine 546, asparagine 603, asparagine 620, and asparagine 631.

Belongs to the herpesviridae U47 family. In terms of assembly, part of a gH-gL-gO complex. A shorter mature protein, gO-80K, is produced probably by proteolytic cleavage. Post-translationally, modified with high mannose-oligosaccharides. In terms of processing, N-glycosylated with complex glycans.

It localises to the virion. The protein localises to the host cell membrane. The protein is 120 kDa Glycoprotein O (U47) of Human herpesvirus 6A (strain Uganda-1102) (HHV-6 variant A).